Consider the following 400-residue polypeptide: Enoyl-[acyl-carrier-protein] reductase [NADH] (400 aa).

NAD(+) contacts are provided by residues 48 to 53 (GSSSGY), 74 to 75 (FE), 111 to 112 (DA), and 139 to 140 (LA). Tyr-225 is a substrate binding site. Tyr-235 serves as the catalytic Proton donor. Residues Lys-244 and 273–275 (VVT) contribute to the NAD(+) site.

It belongs to the TER reductase family. In terms of assembly, monomer.

The catalysed reaction is a 2,3-saturated acyl-[ACP] + NAD(+) = a (2E)-enoyl-[ACP] + NADH + H(+). Its pathway is lipid metabolism; fatty acid biosynthesis. Functionally, involved in the final reduction of the elongation cycle of fatty acid synthesis (FAS II). Catalyzes the reduction of a carbon-carbon double bond in an enoyl moiety that is covalently linked to an acyl carrier protein (ACP). The polypeptide is Enoyl-[acyl-carrier-protein] reductase [NADH] (Shewanella pealeana (strain ATCC 700345 / ANG-SQ1)).